A 165-amino-acid chain; its full sequence is Probable chemoreceptor glutamine deamidase CheD (165 aa).

This sequence belongs to the CheD family.

It catalyses the reaction L-glutaminyl-[protein] + H2O = L-glutamyl-[protein] + NH4(+). In terms of biological role, probably deamidates glutamine residues to glutamate on methyl-accepting chemotaxis receptors (MCPs), playing an important role in chemotaxis. In Clostridium tetani (strain Massachusetts / E88), this protein is Probable chemoreceptor glutamine deamidase CheD.